The chain runs to 304 residues: Ribosomal RNA large subunit methyltransferase F (304 aa).

The protein belongs to the methyltransferase superfamily. METTL16/RlmF family.

It is found in the cytoplasm. It catalyses the reaction adenosine(1618) in 23S rRNA + S-adenosyl-L-methionine = N(6)-methyladenosine(1618) in 23S rRNA + S-adenosyl-L-homocysteine + H(+). Specifically methylates the adenine in position 1618 of 23S rRNA. The sequence is that of Ribosomal RNA large subunit methyltransferase F from Klebsiella pneumoniae (strain 342).